Reading from the N-terminus, the 64-residue chain is Large ribosomal subunit protein bL35 (64 aa).

A compositionally biased stretch (basic residues) spans 1 to 14 (MKNKTHKGTAKRVK). The tract at residues 1-30 (MKNKTHKGTAKRVKVTGSGKLVREQANRRH) is disordered. Positions 21–30 (LVREQANRRH) are enriched in basic and acidic residues.

Belongs to the bacterial ribosomal protein bL35 family.

The protein is Large ribosomal subunit protein bL35 of Corynebacterium efficiens (strain DSM 44549 / YS-314 / AJ 12310 / JCM 11189 / NBRC 100395).